Here is an 87-residue protein sequence, read N- to C-terminus: Beta-defensin 109 (87 aa).

Residues 1–22 form the signal peptide; it reads MRLHLLLLILLLFSILLSPVRG. 3 disulfide bridges follow: Cys-31-Cys-59, Cys-38-Cys-53, and Cys-43-Cys-60.

The protein belongs to the beta-defensin family.

It localises to the secreted. In terms of biological role, has antibacterial activity. This chain is Beta-defensin 109 (DEFB109), found in Pan troglodytes (Chimpanzee).